A 142-amino-acid chain; its full sequence is Protein tost-1 (142 aa).

The segment at 97-123 (KVFEEEDKENAPTKKAVLKPSSTDEKK) is disordered.

Component of the tost-1 variant of the PETISCO complex (also called the pid-3, erh-2, tofu-6, and ife-3 small RNA complex) containing at least tost-1, tofu-6, ife-3, pid-3, and erh-2, which plays an essential role in embryogenesis. Within the complex interacts with erh-2. Within the complex interacts with pid-3 and tofu-6. In contrast to the pid-1 variant of the PETISCO complex, the tost-1 variant of the PETISCO complex plays a minor role in the biogenesis of a class of 21 nucleotide PIWI-interacting RNAs (piRNAs) that possess a uracil residue at the 5'-end (also called 21U-RNAs). Expressed in the germline.

The protein localises to the cytoplasm. It is found in the nucleus. In terms of biological role, component of the tost-1 variant of the PETISCO complex which plays an essential role in embryogenesis. Within the complex acts as an adapter which binds to the complex via erh-2. Does not seem to play a role in the biogenesis of a class of 21 nucleotide PIWI-interacting RNAs (piRNAs) that possess a uracil residue at the 5'-end (also called 21U-RNAs). May inhibit 21U-RNA accumulation. Required for chromosome segregation and cell division in early embryos. In Caenorhabditis elegans, this protein is Protein tost-1.